Consider the following 197-residue polypeptide: Recombination protein RecR (197 aa).

The segment at 55–70 (CVQCRDFTESEICTIC) adopts a C4-type zinc-finger fold. The region spanning 78 to 173 (QQLCVVESPA…RPSRLAQGMP (96 aa)) is the Toprim domain.

Belongs to the RecR family.

May play a role in DNA repair. It seems to be involved in an RecBC-independent recombinational process of DNA repair. It may act with RecF and RecO. In Xanthomonas axonopodis pv. citri (strain 306), this protein is Recombination protein RecR.